A 427-amino-acid polypeptide reads, in one-letter code: tRNA(Ile)-lysidine synthase (427 aa).

Serine 27–serine 32 is an ATP binding site.

This sequence belongs to the tRNA(Ile)-lysidine synthase family.

It is found in the cytoplasm. It carries out the reaction cytidine(34) in tRNA(Ile2) + L-lysine + ATP = lysidine(34) in tRNA(Ile2) + AMP + diphosphate + H(+). Functionally, ligates lysine onto the cytidine present at position 34 of the AUA codon-specific tRNA(Ile) that contains the anticodon CAU, in an ATP-dependent manner. Cytidine is converted to lysidine, thus changing the amino acid specificity of the tRNA from methionine to isoleucine. The chain is tRNA(Ile)-lysidine synthase from Streptococcus equi subsp. zooepidemicus (strain H70).